The following is a 287-amino-acid chain: Kit ligand (287 aa).

The first 25 residues, 1-25 (MKKAQTWIITCFCLQLLLLNPLVKT), serve as a signal peptide directing secretion. The Extracellular portion of the chain corresponds to 26 to 225 (QSSCGNPVTD…LGFISSSSLQ (200 aa)). 2 disulfides stabilise this stretch: C29–C117 and C68–C167. 6 N-linked (GlcNAc...) asparagine glycosylation sites follow: N100, N106, N149, N178, N200, and N206. A helical membrane pass occupies residues 226 to 246 (GISIALTSLLSLLIGFILGVI). The Cytoplasmic portion of the chain corresponds to 247-287 (YWKKTHPKSRPESNETTQCHGCQEENEISMLQQKEKEHLQV).

The protein belongs to the SCF family. As to quaternary structure, homodimer, non-covalently linked. In terms of processing, a soluble form is produced by proteolytic processing of isoform 1 in the extracellular domain.

The protein resides in the cell membrane. Its subcellular location is the secreted. It localises to the cytoplasm. It is found in the cytoskeleton. The protein localises to the cell projection. The protein resides in the lamellipodium. Its subcellular location is the filopodium. Functionally, ligand for the receptor-type protein-tyrosine kinase KIT. Plays an essential role in the regulation of cell survival and proliferation, hematopoiesis, stem cell maintenance, gametogenesis, mast cell development, migration and function, and in melanogenesis. KITLG/SCF binding can activate several signaling pathways. Acts synergistically with other cytokines, probably interleukins. This chain is Kit ligand (KITLG), found in Coturnix japonica (Japanese quail).